The following is a 131-amino-acid chain: Global transcriptional regulator Spx 2 (131 aa).

Cysteine 10 and cysteine 13 are oxidised to a cystine.

It belongs to the ArsC family. Spx subfamily. In terms of assembly, interacts with the C-terminal domain of the alpha subunit of the RNAP.

It localises to the cytoplasm. In terms of biological role, global transcriptional regulator that plays a key role in stress response and exerts either positive or negative regulation of genes. Acts by interacting with the C-terminal domain of the alpha subunit of the RNA polymerase (RNAP). This interaction can enhance binding of RNAP to the promoter region of target genes and stimulate their transcription, or block interaction of RNAP with activator. The polypeptide is Global transcriptional regulator Spx 2 (Bacillus cereus (strain ATCC 14579 / DSM 31 / CCUG 7414 / JCM 2152 / NBRC 15305 / NCIMB 9373 / NCTC 2599 / NRRL B-3711)).